A 568-amino-acid chain; its full sequence is Phosphoprotein (568 aa).

The tract at residues 1-24 (MDQDAFFFERDPEAEGEAPRKQES) is disordered. The span at 7-24 (FFERDPEAEGEAPRKQES) shows a compositional bias: basic and acidic residues. The N0 binding stretch occupies residues 33-41 (DVVLSYKPT). The segment at 45 to 324 (EDRSWLHGII…ANEEETSNTS (280 aa)) is disordered. Composition is skewed to basic and acidic residues over residues 56–105 (NPKE…HARI), 132–144 (RNTRIDEDSPNER), and 151–167 (LTDEDRKMAEDSNKREE). Polar residues predominate over residues 190 to 208 (RTNNNGRSMETSSTHSTRI). Basic and acidic residues predominate over residues 239–253 (TRSERTQNSELHKST). Polar residues predominate over residues 294 to 305 (YTMNNANNNTKS). The tract at residues 344–411 (FELSRSASHV…SSRDLHKRFS (68 aa)) is multimerization. The stretch at 387–416 (EENRTLLKQIQEEINSSRDLHKRFSEYQKE) forms a coiled coil. The l protein binding stretch occupies residues 412 to 445 (EYQKEQNSLMMANLSTLHIITDRGGKTGDPSDTT). A disordered region spans residues 434 to 455 (RGGKTGDPSDTTRSPSVFTKGK). Residues 441–450 (PSDTTRSPSV) show a composition bias toward polar residues. An interaction with the nucleocapsid (N-RNA) region spans residues 479–568 (DLIREDELRD…FEEDIDSLTN (90 aa)).

It belongs to the respirovirus P protein family. In terms of assembly, homotetramer. Interacts (via multimerization domain) with polymerase L; this interaction forms the polymerase complex. Interacts (via N-terminus) with N0; this interaction allows P to chaperon N0 before encapsidation and form the N-P complex. Interacts (via C-terminus) with N-RNA template; this interaction positions the polymerase on the template.

Its function is as follows. Essential cofactor of the RNA polymerase L that plays a central role in the transcription and replication by forming the polymerase complex with RNA polymerase L and recruiting L to the genomic N-RNA template for RNA synthesis. Also plays a central role in the encapsidation of nascent RNA chains by forming the encapsidation complex with the nucleocapsid protein N (N-P complex). Acts as a chaperone for newly synthesized free N protein, so-called N0, allowing encapsidation of nascent RNA chains during replication. The nucleoprotein protein N prevents excessive phosphorylation of P, which leads to down-regulation of viral transcription/ replication. Participates, together with N, in the formation of viral factories (viroplasms), which are large inclusions in the host cytoplasm where replication takes place. Recruits host PI4KB and remodel the host endoplasmic reticulum membrane to form viral replication factories. This chain is Phosphoprotein (P/C), found in Human parainfluenza 1 virus (strain C35) (HPIV-1).